The chain runs to 371 residues: MSL complex subunit 3B (371 aa).

Disordered stretches follow at residues 1–44 (MATL…READ) and 160–229 (EERA…SPQA). Positions 8-44 (PKDDGEGKDEGGSDRGDGDPKPKGKKEVEAHTRREAD) are enriched in basic and acidic residues. Residues 44–367 (DERAVRIPIP…CEAHYSSKNP (324 aa)) enclose the MRG domain. The span at 206–216 (APRRSTRHSTH) shows a compositional bias: basic residues.

It localises to the nucleus. Its function is as follows. Probable non-catalytic component of the MSL histone acetyltransferase complex, a multiprotein complex that mediates the majority of histone H4 acetylation at 'Lys-16' (H4K16ac), an epigenetic mark that prevents chromatin compaction. This Rattus norvegicus (Rat) protein is MSL complex subunit 3B.